Consider the following 1630-residue polypeptide: Probable phosphoinositide phosphatase SAC9 (1630 aa).

Residues Leu147–Tyr527 enclose the SAC domain. The Phosphatase catalytic core; degenerate signature appears at Arg456 to Asn467. One can recognise a WW domain in the interval Ala508–Pro542.

As to expression, ubiquitous. Most abundant in the roots with lower expression levels throughout the leaves and shoot.

Probable phosphoinositide phosphatase that could be involved in stress signaling. The sequence is that of Probable phosphoinositide phosphatase SAC9 (SAC9) from Arabidopsis thaliana (Mouse-ear cress).